The primary structure comprises 239 residues: uncharacterized protein (239 aa).

This is an uncharacterized protein from Homo sapiens (Human).